A 545-amino-acid chain; its full sequence is Chaperonin GroEL (545 aa).

ATP is bound by residues 30–33 (TLGP), K51, 87–91 (DGTTT), G413, 477–479 (NAA), and D493.

The protein belongs to the chaperonin (HSP60) family. As to quaternary structure, forms a cylinder of 14 subunits composed of two heptameric rings stacked back-to-back. Interacts with the co-chaperonin GroES.

It is found in the cytoplasm. It catalyses the reaction ATP + H2O + a folded polypeptide = ADP + phosphate + an unfolded polypeptide.. In terms of biological role, together with its co-chaperonin GroES, plays an essential role in assisting protein folding. The GroEL-GroES system forms a nano-cage that allows encapsulation of the non-native substrate proteins and provides a physical environment optimized to promote and accelerate protein folding. This is Chaperonin GroEL from Pseudomonas putida (Arthrobacter siderocapsulatus).